A 283-amino-acid polypeptide reads, in one-letter code: Non-selective voltage-gated ion channel VDAC3 (283 aa).

Cys2 is modified (N-acetylcysteine). Thr4 is subject to Phosphothreonine. An N6-acetyllysine mark is found at Lys12, Lys15, and Lys20. 2 beta stranded membrane-spanning segments follow: residues 26 to 35 (MVKIDLRTKS) and 39 to 47 (VEFSTSGHA). Lys53 participates in a covalent cross-link: Glycyl lysine isopeptide (Lys-Gly) (interchain with G-Cter in ubiquitin). A run of 3 beta stranded transmembrane segments spans residues 54 to 64 (ASGNLETKYKI), 69 to 76 (LTFTQKWN), and 80 to 89 (TLGTEISWEN). An N6-acetyllysine modification is found at Lys90. Residues 95-104 (LKLTLDTIFV) traverse the membrane as a beta stranded segment. Residues Lys109 and Lys110 each participate in a glycyl lysine isopeptide (Lys-Gly) (interchain with G-Cter in ubiquitin) cross-link. The next 10 membrane-spanning stretches (beta stranded) occupy residues 111–120 (SGKLKASYKR), 123–130 (FSLGSNVD), 137–145 (TIYGWAVLA), 150–158 (LAGYQMSFD), 163–175 (KLSQNNFALGYKA), 178–185 (FQLHTHVN), 189–198 (EFGGSIYQKV), 202–211 (IETSINLAWT), 218–227 (RFGIAAKYKL), and 231–238 (TSLSAKVN). Phosphoserine is present on Ser241. NAD(+)-binding positions include 242-244 (LIG) and 260-264 (SALID). A run of 2 beta stranded transmembrane segments spans residues 242–251 (LIGLGYTQTL) and 254–263 (GVKLTLSALI). The residue at position 266 (Lys266) is an N6-acetyllysine; alternate. A Glycyl lysine isopeptide (Lys-Gly) (interchain with G-Cter in ubiquitin); alternate cross-link involves residue Lys266. Residues 273–282 (HKVGLGFELE) form a beta stranded membrane-spanning segment.

Belongs to the eukaryotic mitochondrial porin family. In terms of assembly, interacts with ARMC12 in a TBC1D21-dependent manner. Interacts with MISFA. In terms of processing, ubiquitinated by PRKN during mitophagy, leading to its degradation and enhancement of mitophagy. Deubiquitinated by USP30.

Its subcellular location is the mitochondrion outer membrane. It localises to the membrane. The enzyme catalyses chloride(in) = chloride(out). It catalyses the reaction K(+)(in) = K(+)(out). Its function is as follows. Non-selective voltage-gated ion channel that mediates the transport of anions and cations through the mitochondrion outer membrane and plasma membrane. Forms a high-conducting channel with a stable open state and a voltage-induced closure with a mild preference for anions over cations. Involved in male fertility and sperm mitochondrial sheath formation. This is Non-selective voltage-gated ion channel VDAC3 from Bos taurus (Bovine).